Reading from the N-terminus, the 36-residue chain is Zinc metalloproteinase-disintegrin-like VaH1 (36 aa).

The 36-residue stretch at M1–N36 folds into the Peptidase M12B domain.

Belongs to the venom metalloproteinase (M12B) family. P-III subfamily. P-IIIa sub-subfamily. In terms of assembly, monomer. Zn(2+) serves as cofactor. The N-terminus is blocked. Post-translationally, glycosylated. In terms of tissue distribution, expressed by the venom gland.

Its subcellular location is the secreted. Its activity is regulated as follows. Inhibited by EDTA, but not inhibited by iodoacetamide, PMSF and pepstatin A. Functionally, snake venom zinc metalloprotease that exhibits strong hemorrhagic activity. It also degrades alpha-chain of fibrinogen (FGA), but not the beta- and the gamma-chains. Possesses potent azocaseinolytic activity and cleaves insulin B-chain, hydrolyzing it at positions Ala(14)-Leu(15), followed by Tyr(16)-Leu(17) and His(10)-Leu(11). In vivo, subcutaneous injection into mice induces strong hemorrhage. The polypeptide is Zinc metalloproteinase-disintegrin-like VaH1 (Vipera ammodytes ammodytes (Western sand viper)).